The following is a 260-amino-acid chain: Aspartate/glutamate leucyltransferase (260 aa).

Residues 241 to 251 (DRLPEEGDRGP) show a composition bias toward basic and acidic residues. A disordered region spans residues 241–260 (DRLPEEGDRGPARFPASLTE).

This sequence belongs to the R-transferase family. Bpt subfamily.

It is found in the cytoplasm. It carries out the reaction N-terminal L-glutamyl-[protein] + L-leucyl-tRNA(Leu) = N-terminal L-leucyl-L-glutamyl-[protein] + tRNA(Leu) + H(+). It catalyses the reaction N-terminal L-aspartyl-[protein] + L-leucyl-tRNA(Leu) = N-terminal L-leucyl-L-aspartyl-[protein] + tRNA(Leu) + H(+). Its function is as follows. Functions in the N-end rule pathway of protein degradation where it conjugates Leu from its aminoacyl-tRNA to the N-termini of proteins containing an N-terminal aspartate or glutamate. The polypeptide is Aspartate/glutamate leucyltransferase (Gluconacetobacter diazotrophicus (strain ATCC 49037 / DSM 5601 / CCUG 37298 / CIP 103539 / LMG 7603 / PAl5)).